Consider the following 202-residue polypeptide: MIGRLRGSLAEKQPPHLVLDVNGVGYELEVPMTTLYRLPHVGETVTLHTHLVVREDAHLLYGFYEKRERELFRELIRLNGVGPKLALALMSGLEVDELVRCVQAQDTSALTRIPGVGKKTAERLLVELKDRFKAWESLPGTFTLVSNGPNQAEPVASAESDAVSALISLGYKPQEASKAVSAIKEKDLSSADLIRRALKGMG.

Positions 1 to 64 (MIGRLRGSLA…EDAHLLYGFY (64 aa)) are domain I. The interval 65 to 143 (EKRERELFRE…AWESLPGTFT (79 aa)) is domain II. Residues 144–153 (LVSNGPNQAE) are flexible linker. Positions 154–202 (PVASAESDAVSALISLGYKPQEASKAVSAIKEKDLSSADLIRRALKGMG) are domain III.

It belongs to the RuvA family. Homotetramer. Forms an RuvA(8)-RuvB(12)-Holliday junction (HJ) complex. HJ DNA is sandwiched between 2 RuvA tetramers; dsDNA enters through RuvA and exits via RuvB. An RuvB hexamer assembles on each DNA strand where it exits the tetramer. Each RuvB hexamer is contacted by two RuvA subunits (via domain III) on 2 adjacent RuvB subunits; this complex drives branch migration. In the full resolvosome a probable DNA-RuvA(4)-RuvB(12)-RuvC(2) complex forms which resolves the HJ.

The protein resides in the cytoplasm. Functionally, the RuvA-RuvB-RuvC complex processes Holliday junction (HJ) DNA during genetic recombination and DNA repair, while the RuvA-RuvB complex plays an important role in the rescue of blocked DNA replication forks via replication fork reversal (RFR). RuvA specifically binds to HJ cruciform DNA, conferring on it an open structure. The RuvB hexamer acts as an ATP-dependent pump, pulling dsDNA into and through the RuvAB complex. HJ branch migration allows RuvC to scan DNA until it finds its consensus sequence, where it cleaves and resolves the cruciform DNA. This chain is Holliday junction branch migration complex subunit RuvA, found in Pseudomonas savastanoi pv. phaseolicola (strain 1448A / Race 6) (Pseudomonas syringae pv. phaseolicola (strain 1448A / Race 6)).